The following is a 374-amino-acid chain: C-C chemokine receptor type 2 (374 aa).

The Extracellular portion of the chain corresponds to 1–42 (MLSTSRSRFIRNTNESGEEVTTFFDYDYGAPCHKFDVKQIGA). The N-linked (GlcNAc...) asparagine glycan is linked to Asn14. Position 26 is a sulfotyrosine (Tyr26). A helical membrane pass occupies residues 43–70 (QLLPPLYSLVFIFGFVGNMLVVLILINC). The Cytoplasmic segment spans residues 71–80 (KKLKCLTDIY). A helical membrane pass occupies residues 81–100 (LLNLAISDLLFLITLPLWAH). The Extracellular segment spans residues 101 to 114 (SAANEWVFGNAMCK). A disulfide bond links Cys113 and Cys190. The chain crosses the membrane as a helical span at residues 115-136 (LFTGLYHIGYFGGIFFIILLTI). The Cytoplasmic portion of the chain corresponds to 137–153 (DRYLAIVHAVFALKART). Tyr139 is modified (phosphotyrosine; by JAK2). Residues 154-178 (VTFGVVTSVITWLVAVFASVPGIIF) traverse the membrane as a helical segment. The Extracellular segment spans residues 179–206 (TKCQKEDSVYVCGPYFPRGWNNFHTIMR). A helical transmembrane segment spans residues 207-226 (NILGLVLPLLIMVICYSGIL). Residues 227-243 (KTLLRCRNEKKRHRAVR) lie on the Cytoplasmic side of the membrane. Residues 244–268 (VIFTIMIVYFLFWTPYNIVILLNTF) traverse the membrane as a helical segment. The Extracellular portion of the chain corresponds to 269-285 (QEFFGLSNCESTSQLDQ). Residues 286-309 (ATQVTETLGMTHCCINPIIYAFVG) form a helical membrane-spanning segment. Residues 310–374 (EKFRSLFHIA…EASLQDKEGA (65 aa)) lie on the Cytoplasmic side of the membrane. Residues 348–374 (QGLLDGRGKGKSIGRAPEASLQDKEGA) form a disordered region.

Belongs to the G-protein coupled receptor 1 family. As to quaternary structure, interacts with ARRB1. Interacts (via extracellular N-terminal region) with beta-defensin DEFB106A/DEFB106B; this interaction may preferentially require specific tyrosine sulfation on CCR2. Interacts with NUP85; the interaction is required for CCR2 clusters formation on the cell membrane and CCR2 signaling. (Microbial infection) Binds to HIV-1 Tat. In terms of processing, N-glycosylated. Post-translationally, sulfation increases the affinity for both monomeric and dimeric CCL2 with stronger binding to the monomeric form. Binding of sulfated CCR2 to CCL2 promotes conversion of CCL2 from dimer to monomer. Expressed by monocytes and IL2-activated NK cells. Abundantly expressed on CD14+/CD16- monocytes and weakly on CD14+/CD16+ monocytes, type 2 dendritic cells (DCs) and plasmacytoid DCs (at protein level).

The protein localises to the cell membrane. Its function is as follows. Key functional receptor for CCL2 but can also bind CCL7, and CCL12. Also transduces signaling mediated by CCL13. Its binding with CCL2 on monocytes and macrophages mediates chemotaxis and migration induction through the activation of the PI3K cascade, the small G protein Rac and lamellipodium protrusion. Also acts as a receptor for the beta-defensin DEFB106A/DEFB106B. Regulates the expression of T-cell inflammatory cytokines and T-cell differentiation, promoting the differentiation of T-cells into T-helper 17 cells (Th17) during inflammation. Facilitates the export of mature thymocytes by enhancing directional movement of thymocytes to sphingosine-1-phosphate stimulation and up-regulation of S1P1R expression; signals through the JAK-STAT pathway to regulate FOXO1 activity leading to an increased expression of S1P1R. Plays an important role in mediating peripheral nerve injury-induced neuropathic pain. Increases NMDA-mediated synaptic transmission in both dopamine D1 and D2 receptor-containing neurons, which may be caused by MAPK/ERK-dependent phosphorylation of GRIN2B/NMDAR2B. Mediates the recruitment of macrophages and monocytes to the injury site following brain injury. (Microbial infection) Alternative coreceptor with CD4 for HIV-1 infection. The protein is C-C chemokine receptor type 2 (CCR2) of Homo sapiens (Human).